Here is a 377-residue protein sequence, read N- to C-terminus: Dehydrogenase/reductase SDR family member 13 (377 aa).

The first 25 residues, 1–25, serve as a signal peptide directing secretion; the sequence is MEALLLGAGLLLGAYVLVYYNLVKA. NAD(+) contacts are provided by S46 and I48. S170 is a binding site for substrate. Positions 197, 201, and 232 each coordinate NAD(+). The Proton acceptor role is filled by Y197. The interval 309-377 is disordered; that stretch reads RLAGLGPGED…AKVEPEIQLS (69 aa). The segment covering 317 to 331 has biased composition (acidic residues); it reads EDAEPDEDPQSEDSE. The segment covering 347–357 has biased composition (low complexity); the sequence is SQPYPSPQSSP. Positions 368-377 are enriched in basic and acidic residues; that stretch reads AKVEPEIQLS.

It belongs to the short-chain dehydrogenases/reductases (SDR) family.

The protein resides in the secreted. Its function is as follows. Putative oxidoreductase. The protein is Dehydrogenase/reductase SDR family member 13 of Homo sapiens (Human).